A 249-amino-acid chain; its full sequence is Probable transcriptional regulatory protein Psyc_0938 (249 aa).

Belongs to the TACO1 family.

The protein resides in the cytoplasm. This is Probable transcriptional regulatory protein Psyc_0938 from Psychrobacter arcticus (strain DSM 17307 / VKM B-2377 / 273-4).